Reading from the N-terminus, the 537-residue chain is Leucine-rich repeat LGI family member 4 (537 aa).

An N-terminal signal peptide occupies residues 1-19; sequence MGGAGILLLLLAGAGVVVA. LRR repeat units follow at residues 53–74, 77–98, 101–122, and 125–146; these read TLLSLSLVRTGVTQLKAGSFLR, SLHLLLFTSNSFSVIEDDAFAG, HLQYLFIEDNEIGSISKNALRG, and SLTHLSLANNHLETLPRFLFRG. Positions 158–208 constitute an LRRCT domain; it reads NPFQCDCRVLWLLQWMPTVNASVGTGACAGPASLSHMQLHHLDPKTFKCRA. Asparagine 177 is a glycosylation site (N-linked (GlcNAc...) asparagine). EAR repeat units lie at residues 210–252, 256–298, 302–349, 351–394, 396–439, 441–483, and 487–532; these read ELSW…SWDY, RFRP…ARPS, RLAP…CRDG, GFYP…HWTG, RFER…RWDG, MFRL…RLEP, and LLEP…QHHE.

In terms of assembly, can bind to ADAM11, ADAM22 and ADAM23. In terms of tissue distribution, widely expressed, with highest expression in brain.

It is found in the secreted. In terms of biological role, component of Schwann cell signaling pathway(s) that controls axon segregation and myelin formation. In Homo sapiens (Human), this protein is Leucine-rich repeat LGI family member 4 (LGI4).